The chain runs to 276 residues: Lyso-ornithine lipid O-acyltransferase (276 aa).

Residues 25 to 47 (LALRGGAMALVLMAGLTLHLAVR) form a helical membrane-spanning segment.

The protein belongs to the 1-acyl-sn-glycerol-3-phosphate acyltransferase family. OlsA subfamily.

It localises to the membrane. The catalysed reaction is a lyso-ornithine lipid + a fatty acyl-[ACP] = an N(2)-[(3R)-3-(acyloxy)acyl]-L-ornithine lipid + holo-[ACP]. It catalyses the reaction a fatty acyl-[ACP] + a 1-acyl-sn-glycero-3-phosphate = a 1,2-diacyl-sn-glycero-3-phosphate + holo-[ACP]. Its pathway is lipid metabolism. The protein operates within phospholipid metabolism. Catalyzes the second step in the formation of ornithine lipids, which are phosphorus-free membrane lipids. Uses acyl-acyl carrier protein (acyl-AcpP) as an acyl donor and converts lyso-ornithine lipid (LOL) into ornithine lipid (OL). It can also act as an alternate acyl-sn-glycerol-3-phosphate acyltransferase (AGPAT) to ensure glycerophospholipid production. The protein is Lyso-ornithine lipid O-acyltransferase of Rhodobacter capsulatus (strain ATCC BAA-309 / NBRC 16581 / SB1003).